Consider the following 131-residue polypeptide: Ribosome-binding factor A (131 aa).

Belongs to the RbfA family. Monomer. Binds 30S ribosomal subunits, but not 50S ribosomal subunits or 70S ribosomes.

The protein localises to the cytoplasm. One of several proteins that assist in the late maturation steps of the functional core of the 30S ribosomal subunit. Associates with free 30S ribosomal subunits (but not with 30S subunits that are part of 70S ribosomes or polysomes). Required for efficient processing of 16S rRNA. May interact with the 5'-terminal helix region of 16S rRNA. This is Ribosome-binding factor A from Picosynechococcus sp. (strain ATCC 27264 / PCC 7002 / PR-6) (Agmenellum quadruplicatum).